The chain runs to 122 residues: Large ribosomal subunit protein bL12 (122 aa).

It belongs to the bacterial ribosomal protein bL12 family. Homodimer. Part of the ribosomal stalk of the 50S ribosomal subunit. Forms a multimeric L10(L12)X complex, where L10 forms an elongated spine to which 2 to 4 L12 dimers bind in a sequential fashion. Binds GTP-bound translation factors.

Its function is as follows. Forms part of the ribosomal stalk which helps the ribosome interact with GTP-bound translation factors. Is thus essential for accurate translation. The polypeptide is Large ribosomal subunit protein bL12 (Yersinia pseudotuberculosis serotype O:1b (strain IP 31758)).